A 254-amino-acid polypeptide reads, in one-letter code: Flavin-dependent thymidylate synthase (254 aa).

Residues 7–237 (LRVQLIAKTE…PAVFADFEIT (231 aa)) enclose the ThyX domain. DUMP contacts are provided by residues 92-95 (ELIR), 103-107 (QLSQR), and histidine 176. FAD is bound by residues 95–97 (RHR) and glutamine 103. A ThyX motif motif is present at residues 95-105 (RHRHFSYSQLS). FAD contacts are provided by residues 192–194 (NYR) and histidine 198. Arginine 203 serves as a coordination point for dUMP. Arginine 203 acts as the Involved in ionization of N3 of dUMP, leading to its activation in catalysis.

The protein belongs to the thymidylate synthase ThyX family. Homotetramer. Requires FAD as cofactor.

The enzyme catalyses dUMP + (6R)-5,10-methylene-5,6,7,8-tetrahydrofolate + NADPH + H(+) = dTMP + (6S)-5,6,7,8-tetrahydrofolate + NADP(+). Its pathway is pyrimidine metabolism; dTTP biosynthesis. Catalyzes the reductive methylation of 2'-deoxyuridine-5'-monophosphate (dUMP) to 2'-deoxythymidine-5'-monophosphate (dTMP) while utilizing 5,10-methylenetetrahydrofolate (mTHF) as the methyl donor, and NADPH and FADH(2) as the reductant. This chain is Flavin-dependent thymidylate synthase, found in Mycobacterium leprae (strain Br4923).